Consider the following 371-residue polypeptide: MLLLPLSVLLLLTQPWRSLGAEMKIYSQKTLANGCTLVVCRPPEGGLPGRDGQDGREGPQGEKGDPGSPGPAGRAGRPGPAGPIGPKGDNGSAGEPGPKGDTGPPGPPGMPGPAGREGPSGKQGSMGPPGTPGPKGDTGPKGGMGAPGMQGSPGPAGLKGERGAPGELGAPGSAGVAGPAGAIGPQGPSGARGPPGLKGDRGDPGERGAKGESGLADVNALKQRVTILEGQLQRLQNAFSRYKKAVLFPDGQAVGKKIFKTAGAVKSYSDAQQLCREAKGQLASPRSAAENEAVAQLVRAKNNDAFLSMNDISTEGKFTYPTGESLVYSNWASGEPNNNNAGQPENCVQIYREGKWNDVPCSEPLLVICEF.

The signal sequence occupies residues 1-20 (MLLLPLSVLLLLTQPWRSLG). Residues 43–215 (PEGGLPGRDG…ERGAKGESGL (173 aa)) form a disordered region. Positions 46–216 (GLPGRDGQDG…RGAKGESGLA (171 aa)) constitute a Collagen-like domain. Positions 51-65 (DGQDGREGPQGEKGD) are enriched in basic and acidic residues. An N-linked (GlcNAc...) asparagine glycan is attached at Asn90. Low complexity predominate over residues 113–128 (PAGREGPSGKQGSMGP). Gly residues predominate over residues 139–148 (GPKGGMGAPG). Residues 170 to 191 (APGSAGVAGPAGAIGPQGPSGA) are compositionally biased toward low complexity. Residues 198-210 (KGDRGDPGERGAK) are compositionally biased toward basic and acidic residues. Residues 201–203 (RGD) carry the Cell attachment site motif. Residues 273-371 (QLCREAKGQL…SEPLLVICEF (99 aa)) form the C-type lectin domain. 2 disulfide bridges follow: Cys275–Cys369 and Cys347–Cys361.

Belongs to the SFTPD family. Oligomeric complex of 4 set of homotrimers. Hydroxylated. As to expression, highly expressed in thymus and liver.

It localises to the secreted. This is Collectin-46 (CL46) from Bos taurus (Bovine).